Consider the following 582-residue polypeptide: Putative G-protein coupled receptor B0244.10 (582 aa).

The next 4 helical transmembrane spans lie at 25–45 (LYII…PLGL), 70–90 (ITFS…GFAV), 120–140 (WTFF…GLVI), and 159–179 (LLVQ…VFLT). N-linked (GlcNAc...) asparagine glycosylation is present at Asn-190. A helical membrane pass occupies residues 199–218 (LTLGKWFIALYRFLFQMTNI). Residues Asn-221 and Asn-237 are each glycosylated (N-linked (GlcNAc...) asparagine). 5 consecutive transmembrane segments (helical) span residues 253–273 (SLMI…AVLV), 296–316 (YIFV…IIII), 329–349 (TFAF…SLLG), 377–397 (IYII…PFGL), and 421–441 (WLLF…LLFV). Asn-457 carries N-linked (GlcNAc...) asparagine glycosylation. 2 consecutive transmembrane segments (helical) span residues 475 to 495 (TILV…AAFG) and 513 to 533 (LIFP…TFLL). Residue Asn-538 is glycosylated (N-linked (GlcNAc...) asparagine).

It belongs to the G-protein coupled receptor 1 family. B0244 subfamily.

The protein localises to the cell membrane. The chain is Putative G-protein coupled receptor B0244.10 from Caenorhabditis elegans.